The sequence spans 511 residues: MSILWIVAYALLAFAASIALNLVYQFLYRTFNKSRPPLVFHWVPFIGSTIHYGMDPYNFFFSCREKYGDIFTFILLGRPTTVYLGTQGNEFILNGKLKDVNAEEVYSPLTTPVFGSDVVYDCPNSKLIEQKKFIKFGLSQAALEAHVPLIEKEVIDYLAQSPNFNGTAGTVDIASAMAEITIFTAGSTLQGEEVRSKLTTEFAVLYHDLDKGFTPINFMLPWAPLPHNKKRDAAHARMRAIYIDIINKRRKAGNAATGKPDMIENLMQCTYKNGQPLPDKEIAHIMITLLMAGQHSSSSIGSWIMLRLASQPAIVEELYQEQLANLERTANGSLPPLQFKDIENLPLHQNVIRETLRLHGSIHSLLRKVKNPLPVPGTPYIIPTSHVLLSAPGVTALSDEYFPNAMAWDPHRWETQAPEESKEDIVDYGYGAMSKGTSSPYLPFGAGRHRCIGEKFAYLNLTVIVATLVRHLRFHNLDGKKGVPGTDYTSLFSGPLKPTRVGWERRAAKSA.

A helical membrane pass occupies residues 3-23 (ILWIVAYALLAFAASIALNLV). A heme-binding site is contributed by C451.

The protein belongs to the cytochrome P450 family. Heme serves as cofactor.

The protein resides in the membrane. The enzyme catalyses a 14alpha-methyl steroid + 3 reduced [NADPH--hemoprotein reductase] + 3 O2 = a Delta(14) steroid + formate + 3 oxidized [NADPH--hemoprotein reductase] + 4 H2O + 4 H(+). The catalysed reaction is a 14alpha-methyl steroid + reduced [NADPH--hemoprotein reductase] + O2 = a 14alpha-hydroxymethyl steroid + oxidized [NADPH--hemoprotein reductase] + H2O + H(+). It carries out the reaction a 14alpha-hydroxymethyl steroid + reduced [NADPH--hemoprotein reductase] + O2 = a 14alpha-formyl steroid + oxidized [NADPH--hemoprotein reductase] + 2 H2O + H(+). It catalyses the reaction a 14alpha-formyl steroid + reduced [NADPH--hemoprotein reductase] + O2 = a Delta(14) steroid + formate + oxidized [NADPH--hemoprotein reductase] + H2O + 2 H(+). The enzyme catalyses lanosterol + 3 reduced [NADPH--hemoprotein reductase] + 3 O2 = 4,4-dimethyl-5alpha-cholesta-8,14,24-trien-3beta-ol + formate + 3 oxidized [NADPH--hemoprotein reductase] + 4 H2O + 4 H(+). The catalysed reaction is lanosterol + reduced [NADPH--hemoprotein reductase] + O2 = 32-hydroxylanosterol + oxidized [NADPH--hemoprotein reductase] + H2O + H(+). It carries out the reaction 32-hydroxylanosterol + reduced [NADPH--hemoprotein reductase] + O2 = 32-oxolanosterol + oxidized [NADPH--hemoprotein reductase] + 2 H2O + H(+). It catalyses the reaction 32-oxolanosterol + reduced [NADPH--hemoprotein reductase] + O2 = 4,4-dimethyl-5alpha-cholesta-8,14,24-trien-3beta-ol + formate + oxidized [NADPH--hemoprotein reductase] + H2O + 2 H(+). The enzyme catalyses eburicol + 3 reduced [NADPH--hemoprotein reductase] + 3 O2 = 14-demethyleburicol + formate + 3 oxidized [NADPH--hemoprotein reductase] + 4 H2O + 4 H(+). The catalysed reaction is eburicol + reduced [NADPH--hemoprotein reductase] + O2 = 32-hydroxyeburicol + oxidized [NADPH--hemoprotein reductase] + H2O + H(+). It carries out the reaction 32-hydroxyeburicol + reduced [NADPH--hemoprotein reductase] + O2 = 32-oxoeburicol + oxidized [NADPH--hemoprotein reductase] + 2 H2O + H(+). It catalyses the reaction 32-oxoeburicol + reduced [NADPH--hemoprotein reductase] + O2 = 14-demethyleburicol + formate + oxidized [NADPH--hemoprotein reductase] + H2O + 2 H(+). In terms of biological role, sterol 14-alpha demethylase; part of the gene cluster that mediates the biosynthesis of the tetrahydropyranyl antifungal agent restricticin that acts as an inhibitor of CYP51 and blocks the ergosterol biosynthesis. Sterol 14-alpha-demethylase plays a critical role in the biosynthesis of ergosterol, the major sterol component in fungal membranes that participates in a variety of functions. ResB acts as a self-resistant CYP51 that contains mutations found in CYP51s isolated from azole resistance strains and that is not inhibited by the final product of the cluster, restricticin. The chain is Sterol 14-alpha demethylase resB from Aspergillus sclerotiorum.